A 520-amino-acid chain; its full sequence is Amine oxidase [flavin-containing] B (520 aa).

An N-acetylserine modification is found at S2. The Cytoplasmic portion of the chain corresponds to 2 to 489 (SNKSDVIVVG…TFLERHLPSV (488 aa)). K52 and K248 each carry N6-acetyllysine. C397 carries the S-8alpha-FAD cysteine modification. Residues 490–516 (PGLLKLFGLTTILSATALGFLAHKRGL) form a helical; Anchor for type IV membrane protein membrane-spanning segment. The Mitochondrial intermembrane segment spans residues 517-520 (FVHF).

It belongs to the flavin monoamine oxidase family. Monomer, homo- or heterodimer (containing two subunits of similar size). Each subunit contains a covalently bound flavin. Enzymatically active as monomer. Requires FAD as cofactor.

Its subcellular location is the mitochondrion outer membrane. The catalysed reaction is a secondary aliphatic amine + O2 + H2O = a primary amine + an aldehyde + H2O2. It carries out the reaction (R)-adrenaline + O2 + H2O = (R)-3,4-dihydroxymandelaldehyde + methylamine + H2O2. It catalyses the reaction a primary methyl amine + O2 + H2O = an aldehyde + H2O2 + NH4(+). The enzyme catalyses benzylamine + O2 + H2O = benzaldehyde + H2O2 + NH4(+). The catalysed reaction is dopamine + O2 + H2O = 3,4-dihydroxyphenylacetaldehyde + H2O2 + NH4(+). It carries out the reaction tyramine + O2 + H2O = (4-hydroxyphenyl)acetaldehyde + H2O2 + NH4(+). It catalyses the reaction (R)-noradrenaline + O2 + H2O = (R)-3,4-dihydroxymandelaldehyde + H2O2 + NH4(+). The enzyme catalyses 2-phenylethylamine + O2 + H2O = 2-phenylacetaldehyde + H2O2 + NH4(+). The catalysed reaction is N-acetylputrescine + O2 + H2O = 4-acetamidobutanal + H2O2 + NH4(+). In terms of biological role, catalyzes the oxidative deamination of primary and some secondary amines such as neurotransmitters, and exogenous amines including the tertiary amine, neurotoxin 1-methyl-4-phenyl-1,2,3,6-tetrahydropyridine (MPTP), with concomitant reduction of oxygen to hydrogen peroxide and participates in the metabolism of neuroactive and vasoactive amines in the central nervous system and peripheral tissues. Preferentially degrades benzylamine and phenylethylamine. The sequence is that of Amine oxidase [flavin-containing] B from Mus musculus (Mouse).